Here is a 491-residue protein sequence, read N- to C-terminus: MAKQWEVVIGLETHAQLSTQSKIFSGTATQFGAAPNTQASPVDLALPGTLPVMNRGAVERAIQFGLAIGATVAPRSIFARKNYFYPDLPKGYQISQYEIPVVQGGQVTIQVPANEKAGKEAYEKVVNLTRAHLEEDAGKSLHEDFAGMTGIDLNRAGTPLLEIVTEPEMRSAAEAVAYAKTLHTLVTWLGICDGNMQEGSFRCDANVSVRPVGQAEFGTRAEIKNLNSFRFLEEAIQYEVRRQIELIEDGGTVVQETRLYDPDKRETRSMRSKEDAHDYRYFPDPDLMPLVIDAAWIERVKAEMTELPVAIQQRFVSQYGLTPYDANVLTSSKAMAAYYEAVVSKVGPANAKVAANWLMGEVSSQLNREGLDIAENPVSSAQLALLLQRIADGTISNKIAKEIFLAIWEEKATDESAADRIIEAKGLKQISDTGALEAIIDEVLAANPKSVEEFRAGKEKAFNALIGQAMKATKGKANPAQVNELLKKKLS.

The protein belongs to the GatB/GatE family. GatB subfamily. In terms of assembly, heterotrimer of A, B and C subunits.

The catalysed reaction is L-glutamyl-tRNA(Gln) + L-glutamine + ATP + H2O = L-glutaminyl-tRNA(Gln) + L-glutamate + ADP + phosphate + H(+). It carries out the reaction L-aspartyl-tRNA(Asn) + L-glutamine + ATP + H2O = L-asparaginyl-tRNA(Asn) + L-glutamate + ADP + phosphate + 2 H(+). Functionally, allows the formation of correctly charged Asn-tRNA(Asn) or Gln-tRNA(Gln) through the transamidation of misacylated Asp-tRNA(Asn) or Glu-tRNA(Gln) in organisms which lack either or both of asparaginyl-tRNA or glutaminyl-tRNA synthetases. The reaction takes place in the presence of glutamine and ATP through an activated phospho-Asp-tRNA(Asn) or phospho-Glu-tRNA(Gln). The polypeptide is Aspartyl/glutamyl-tRNA(Asn/Gln) amidotransferase subunit B (Paraburkholderia phytofirmans (strain DSM 17436 / LMG 22146 / PsJN) (Burkholderia phytofirmans)).